The following is an 86-amino-acid chain: Small ribosomal subunit protein uS17 (86 aa).

The protein belongs to the universal ribosomal protein uS17 family. Part of the 30S ribosomal subunit.

One of the primary rRNA binding proteins, it binds specifically to the 5'-end of 16S ribosomal RNA. This chain is Small ribosomal subunit protein uS17, found in Desulfitobacterium hafniense (strain DSM 10664 / DCB-2).